We begin with the raw amino-acid sequence, 125 residues long: Large ribosomal subunit protein bL12 (125 aa).

Belongs to the bacterial ribosomal protein bL12 family. Homodimer. Part of the ribosomal stalk of the 50S ribosomal subunit. Forms a multimeric L10(L12)X complex, where L10 forms an elongated spine to which 2 to 4 L12 dimers bind in a sequential fashion. Binds GTP-bound translation factors.

Functionally, forms part of the ribosomal stalk which helps the ribosome interact with GTP-bound translation factors. Is thus essential for accurate translation. This Ruthia magnifica subsp. Calyptogena magnifica protein is Large ribosomal subunit protein bL12.